The sequence spans 419 residues: Oligouridylate-binding protein 1B (419 aa).

2 RRM domains span residues Arg54–Ala128 and Phe139–Lys217. Residues Lys217–Ala257 form a disordered region. Ser241 is subject to Phosphoserine. Positions Thr260–Lys335 constitute an RRM 3 domain.

Interacts with UBA1A and UBA2A.

It localises to the nucleus. Functionally, heterogeneous nuclear ribonucleoprotein (hnRNP)-like protein that acts as a component of the pre-mRNA processing machinery. Functions to facilitate the nuclear maturation of plant pre-mRNAs. The chain is Oligouridylate-binding protein 1B (UBP1B) from Arabidopsis thaliana (Mouse-ear cress).